A 323-amino-acid polypeptide reads, in one-letter code: Trihelix transcription factor GT-3a (323 aa).

Residues methionine 1–leucine 20 are compositionally biased toward basic residues. A disordered region spans residues methionine 1–glutamine 51. A Myb-like domain is found at tryptophan 52–valine 108. 3 disordered regions span residues glutamate 147–glutamine 176, lysine 190–alanine 220, and glutamate 269–glutamine 297. Positions serine 164–glutamine 176 are enriched in acidic residues.

Homodimer. Heterodimer with GT-3B. In terms of tissue distribution, predominantly expressed in roots and flower buds.

It localises to the nucleus. Probable transcription factor that binds specifically to the core DNA sequence 5'-GTTAC-3'. This is Trihelix transcription factor GT-3a (GT-3A) from Arabidopsis thaliana (Mouse-ear cress).